Reading from the N-terminus, the 100-residue chain is Aspartyl/glutamyl-tRNA(Asn/Gln) amidotransferase subunit C (100 aa).

It belongs to the GatC family. As to quaternary structure, heterotrimer of A, B and C subunits.

It carries out the reaction L-glutamyl-tRNA(Gln) + L-glutamine + ATP + H2O = L-glutaminyl-tRNA(Gln) + L-glutamate + ADP + phosphate + H(+). The enzyme catalyses L-aspartyl-tRNA(Asn) + L-glutamine + ATP + H2O = L-asparaginyl-tRNA(Asn) + L-glutamate + ADP + phosphate + 2 H(+). Its function is as follows. Allows the formation of correctly charged Asn-tRNA(Asn) or Gln-tRNA(Gln) through the transamidation of misacylated Asp-tRNA(Asn) or Glu-tRNA(Gln) in organisms which lack either or both of asparaginyl-tRNA or glutaminyl-tRNA synthetases. The reaction takes place in the presence of glutamine and ATP through an activated phospho-Asp-tRNA(Asn) or phospho-Glu-tRNA(Gln). This chain is Aspartyl/glutamyl-tRNA(Asn/Gln) amidotransferase subunit C, found in Herminiimonas arsenicoxydans.